The chain runs to 619 residues: E3 ubiquitin-protein ligase complex SLX5-SLX8 subunit SLX5 (619 aa).

The disordered stretch occupies residues 1 to 23 (MHSDTNGRTKSNNSPSDNNPNET). A compositionally biased stretch (low complexity) spans 11-21 (SNNSPSDNNPN). Serine 14 and serine 29 each carry phosphoserine. A disordered region spans residues 63 to 90 (VRSDSRSRNSQRTHITASSERPDFQANN). Residues 70 to 90 (RNSQRTHITASSERPDFQANN) show a composition bias toward polar residues. Positions 201–335 (SRRQLLRRSA…ALFTEFRNQL (135 aa)) are EUC1 interaction domain.

As to quaternary structure, component of the heterodimeric SUMO-targeted ubiquitin ligase (STUbL) complex composed of SLX5 and SLX8. Interacts with sirtuin SIR2. Interacts with KAR9. Interacts with EUC1.

It is found in the nucleus. It localises to the chromosome. Its subcellular location is the centromere. The protein localises to the kinetochore. The enzyme catalyses S-ubiquitinyl-[E2 ubiquitin-conjugating enzyme]-L-cysteine + [acceptor protein]-L-lysine = [E2 ubiquitin-conjugating enzyme]-L-cysteine + N(6)-ubiquitinyl-[acceptor protein]-L-lysine.. It participates in protein modification; protein ubiquitination. Component of the SUMO-targeted ubiquitin ligase (STUbL) complex SLX5/SLX8 that mediates ubiquitination and subsequent desumoylation of sumoylated proteins and proteins containing SUMO-like domains for their degradation. The STUbL complex SLX5/SLX8 stimulates ubiquitin conjugating enzymes, including UBC1, UBC4, UBC5 and UBC13-MMS2, and mediates the proteolytic down-regulation of sumoylated proteins. The STUbL complex SLX5/SLX8 is involved in ubiquitin-mediated degradation of histone variant CSE4, preventing mislocalization to euchromatin. The complex plays an essential role in maintenance of chromosome stability and links SUMO-dependent ubiquitination to a centromere-specific function during mitosis. The complex is involved in proteolysis of spindle positioning protein KAR9 and ensures correct spindle function by regulating levels of microtubule-associated proteins. During replication, the complex helps prevent DNA lesions via recombination and has a role in localizing the DNA damage protein DCD2. The complex especially ubiquitinates the nuclease YEN1 and prevents persistent accumulation of a fraction of YEN1 associated with sites of activity in late G2/M and helps maintain the balance between pro- and anti-crossover pathways during homologous recombination. It is also involved in ubiquitin-mediated degradation of DNA repair proteins RAD52 and RAD57. Along with SIR2, promotes silencing of genes at telomeric or ribosomal DNA (rDNA) loci. Finally, the complex is recruited to distinct genomic hotspots of non-H2B protein ubiquitination (ub-hotspots) by the sumoylated transcription factor-like protein EUC1 where it ubiquitinates EUC1 and presumably other targets. This chain is E3 ubiquitin-protein ligase complex SLX5-SLX8 subunit SLX5 (SLX5), found in Saccharomyces cerevisiae (strain ATCC 204508 / S288c) (Baker's yeast).